A 467-amino-acid polypeptide reads, in one-letter code: UDP-N-acetylmuramoylalanine--D-glutamate ligase (467 aa).

An ATP-binding site is contributed by 121–127; it reads GTNGKST.

This sequence belongs to the MurCDEF family.

Its subcellular location is the cytoplasm. It carries out the reaction UDP-N-acetyl-alpha-D-muramoyl-L-alanine + D-glutamate + ATP = UDP-N-acetyl-alpha-D-muramoyl-L-alanyl-D-glutamate + ADP + phosphate + H(+). The protein operates within cell wall biogenesis; peptidoglycan biosynthesis. Its function is as follows. Cell wall formation. Catalyzes the addition of glutamate to the nucleotide precursor UDP-N-acetylmuramoyl-L-alanine (UMA). The protein is UDP-N-acetylmuramoylalanine--D-glutamate ligase of Brucella suis biovar 1 (strain 1330).